We begin with the raw amino-acid sequence, 81 residues long: Costars family protein ABRACL (81 aa).

Met1 carries the N-acetylmethionine modification.

The protein belongs to the costars family.

This chain is Costars family protein ABRACL (ABRACL), found in Homo sapiens (Human).